A 300-amino-acid chain; its full sequence is Uricase (300 aa).

A2 carries the N-acetylalanine modification. N6-acetyllysine; alternate is present on residues K6 and K19. Residues K6 and K19 each carry the N6-succinyllysine; alternate modification. The active-site Charge relay system is the K19. Residues K23 and K32 each carry the N6-acetyllysine modification. S35 and S59 each carry phosphoserine. The active-site Charge relay system is T64. The urate site is built by T64 and D65. N6-acetyllysine is present on residues K114, K118, and K160. F166 is a urate binding site. An N6-acetyllysine mark is found at K171 and K181. R183 lines the urate pocket. 2 positions are modified to N6-acetyllysine; alternate: K217 and K224. N6-succinyllysine; alternate is present on residues K217 and K224. S228 carries the post-translational modification Phosphoserine. Urate is bound by residues V231, Q232, and N258. The Charge relay system role is filled by H260. K274 is subject to N6-acetyllysine. Y285 is subject to Phosphotyrosine. The Microbody targeting signal motif lies at 298–300; sequence SRL.

The protein belongs to the uricase family.

It is found in the peroxisome. The enzyme catalyses urate + O2 + H2O = 5-hydroxyisourate + H2O2. The protein operates within purine metabolism; urate degradation; (S)-allantoin from urate: step 1/3. Catalyzes the oxidation of uric acid to 5-hydroxyisourate, which is further processed to form (S)-allantoin. The polypeptide is Uricase (UOX) (Oryctolagus cuniculus (Rabbit)).